Consider the following 236-residue polypeptide: 2-C-methyl-D-erythritol 4-phosphate cytidylyltransferase (236 aa).

It belongs to the IspD/TarI cytidylyltransferase family. IspD subfamily.

It carries out the reaction 2-C-methyl-D-erythritol 4-phosphate + CTP + H(+) = 4-CDP-2-C-methyl-D-erythritol + diphosphate. It participates in isoprenoid biosynthesis; isopentenyl diphosphate biosynthesis via DXP pathway; isopentenyl diphosphate from 1-deoxy-D-xylulose 5-phosphate: step 2/6. In terms of biological role, catalyzes the formation of 4-diphosphocytidyl-2-C-methyl-D-erythritol from CTP and 2-C-methyl-D-erythritol 4-phosphate (MEP). This Alkaliphilus oremlandii (strain OhILAs) (Clostridium oremlandii (strain OhILAs)) protein is 2-C-methyl-D-erythritol 4-phosphate cytidylyltransferase.